The sequence spans 103 residues: uncharacterized protein (103 aa).

This is an uncharacterized protein from Microplitis demolitor (Parasitoid wasp).